The primary structure comprises 389 residues: Oxytocin receptor (389 aa).

Residues 1 to 38 (MEGALAANWSAEAANASAAPPGAEGNRTAGPPRRNEAL) are Extracellular-facing. The span at 7–26 (ANWSAEAANASAAPPGAEGN) shows a compositional bias: low complexity. Residues 7–31 (ANWSAEAANASAAPPGAEGNRTAGP) form a disordered region. N-linked (GlcNAc...) asparagine glycosylation is found at Asn8, Asn15, and Asn26. The helical transmembrane segment at 39–63 (ARVEVAVLCLILLLALSGNACVLLA) threads the bilayer. Topologically, residues 64–74 (LRTTRQKHSRL) are cytoplasmic. Residues 75–97 (FFFMKHLSIADLVVAVFQVLPQL) traverse the membrane as a helical segment. Topologically, residues 98-113 (LWDITFRFYGPDLLCR) are extracellular. Cys112 and Cys187 are disulfide-bonded. A helical membrane pass occupies residues 114–135 (LVKYLQVVGMFASTYLLLLMSL). Over 136–154 (DRCLAICQPLRSLRRRTDR) the chain is Cytoplasmic. Residues 155 to 175 (LAVLATWLGCLVASAPQVHIF) form a helical membrane-spanning segment. The Extracellular portion of the chain corresponds to 176-202 (SLREVADGVFDCWAVFIQPWGPKAYIT). Residues 203–225 (WITLAVYIVPVIVLAACYGLISF) form a helical membrane-spanning segment. The Cytoplasmic portion of the chain corresponds to 226-275 (KIWQNLRLKTAAAAAAEAPEGAAAGDGGRVALARVSSVKLISKAKIRTVK). The helical transmembrane segment at 276 to 294 (MTFIIVLAFIVCWTPFFFV) threads the bilayer. Residues 295-309 (QMWSVWDANAPKEAS) are Extracellular-facing. The chain crosses the membrane as a helical span at residues 310–332 (AFIIVMLLASLNSCCNPWIYMLF). Residues 333–389 (TGHLFHELVQRFLCCSASYLKGRRLGETSASKKSNSSSFVLSHRSSSQRSCSQPSTA) lie on the Cytoplasmic side of the membrane. The disordered stretch occupies residues 361 to 389 (SASKKSNSSSFVLSHRSSSQRSCSQPSTA). Phosphoserine is present on residues Ser366 and Ser368.

Belongs to the G-protein coupled receptor 1 family. Vasopressin/oxytocin receptor subfamily.

It is found in the cell membrane. In terms of biological role, receptor for oxytocin. The activity of this receptor is mediated by G proteins which activate a phosphatidylinositol-calcium second messenger system. In Homo sapiens (Human), this protein is Oxytocin receptor (OXTR).